Reading from the N-terminus, the 150-residue chain is Large ribosomal subunit protein bL9 (150 aa).

It belongs to the bacterial ribosomal protein bL9 family.

Its function is as follows. Binds to the 23S rRNA. This is Large ribosomal subunit protein bL9 from Thioalkalivibrio sulfidiphilus (strain HL-EbGR7).